Reading from the N-terminus, the 228-residue chain is Urease accessory protein UreF (228 aa).

The protein belongs to the UreF family. In terms of assembly, ureD, UreF and UreG form a complex that acts as a GTP-hydrolysis-dependent molecular chaperone, activating the urease apoprotein by helping to assemble the nickel containing metallocenter of UreC. The UreE protein probably delivers the nickel.

It is found in the cytoplasm. In terms of biological role, required for maturation of urease via the functional incorporation of the urease nickel metallocenter. The polypeptide is Urease accessory protein UreF (Prochlorococcus marinus (strain MIT 9312)).